The following is a 342-amino-acid chain: MKIAIDAMGGDYAPMEIVKGVEIARDRYPDIEFLLFGTSEQVKPLVKDWSHITLIPTTEVIEMGDEPVKAMRRKKDSSMVRAANAVKAGEADALFSAGNTGALLSSAIFLIGRIKGVDRPALATALPSFAGENDQFVFMDLGANAESKASHLYQYGILGSFYASHVLGINDARVRLLNNGAEEDKGDEVHKIAHQLMKNSQSFNFLGNVEARELLEGTADVVVADGFSGNAALKATEGTALMMLKQIKQAIMQTGLRGKMGGLLLKPAFKDIQKKLDYNEAGGAVILGVNAPVVKTHGSAKANAVANTMGQIKKMIEKNLVPDIRTYIADHKDELQAAKNEL.

The protein belongs to the PlsX family. In terms of assembly, homodimer. Probably interacts with PlsY.

The protein localises to the cytoplasm. It catalyses the reaction a fatty acyl-[ACP] + phosphate = an acyl phosphate + holo-[ACP]. Its pathway is lipid metabolism; phospholipid metabolism. Catalyzes the reversible formation of acyl-phosphate (acyl-PO(4)) from acyl-[acyl-carrier-protein] (acyl-ACP). This enzyme utilizes acyl-ACP as fatty acyl donor, but not acyl-CoA. The sequence is that of Phosphate acyltransferase from Leuconostoc mesenteroides subsp. mesenteroides (strain ATCC 8293 / DSM 20343 / BCRC 11652 / CCM 1803 / JCM 6124 / NCDO 523 / NBRC 100496 / NCIMB 8023 / NCTC 12954 / NRRL B-1118 / 37Y).